Reading from the N-terminus, the 171-residue chain is ASQKRPSQRHGSKYLATASTMDHARHGFLPRHRDTGILDSIGRFFGGDRGAPKRGSGKDSHHPARTAHYGSLPQKSGHRTQDENPVVHFFKNIVTPRTPPPSQGKGRGLSLSRFSWGAEGQRPGFGYGGRASDYKSAHKGFKGAQDAQGTLSKIFKLGGRDSRSGSPMARR.

The residue at position 1 (alanine 1) is an N-acetylalanine. Residues serine 7 and serine 12 each carry the phosphoserine modification. Position 14 is a phosphotyrosine (tyrosine 14). Threonine 17 carries the post-translational modification Phosphothreonine. Serine 19 carries the post-translational modification Phosphoserine. Phosphothreonine is present on threonine 20. Citrulline is present on residues arginine 25 and arginine 31. Residue threonine 35 is modified to Phosphothreonine. At serine 40 the chain carries Phosphoserine. Omega-N-methylarginine is present on residues arginine 43 and arginine 49. The interval 44-115 (FFGGDRGAPK…GRGLSLSRFS (72 aa)) is disordered. Residue serine 56 is modified to Phosphoserine. Tyrosine 69 is subject to Phosphotyrosine. Phosphoserine is present on serine 76. Residues threonine 80, threonine 95, and threonine 98 each carry the phosphothreonine modification. Deamidated glutamine is present on glutamine 103. Arginine 107 carries the omega-N-methylarginine; alternate modification. Arginine 107 is modified (symmetric dimethylarginine; alternate). Position 115 is a phosphoserine (serine 115). Residues arginine 122 and arginine 130 each carry the citrulline modification. Glutamine 148 is modified (deamidated glutamine). Citrulline is present on arginine 160. Position 162 is a phosphoserine (serine 162). At serine 166 the chain carries Phosphoserine; by UHMK1. Citrulline is present on arginine 171.

It belongs to the myelin basic protein family. As to quaternary structure, homodimer. In terms of processing, as in other animals, several charge isomers may be produced as a result of optional post-translational modifications, such as phosphorylation of serine or threonine residues, deamidation of glutamine or asparagine residues, citrullination and methylation of arginine residues. Phosphorylated by TAOK2, VRK2, MAPK11, MAPK12, MAPK14 and MINK1. Post-translationally, proteolytically cleaved in B cell lysosomes by cathepsin CTSG which degrades the major immunogenic MBP epitope and prevents the activation of MBP-specific autoreactive T cells.

Its subcellular location is the myelin membrane. Its function is as follows. Is, with PLP, the most abundant protein component of the myelin membrane in the CNS. Has a role in both the formation and stabilization of this compact multilayer arrangement of bilayers. Each splice variant and charge isomer may have a specialized function in the assembly of an optimized, biochemically functional myelin membrane. This is Myelin basic protein (MBP) from Pan troglodytes (Chimpanzee).